The primary structure comprises 267 residues: 3-methyl-2-oxobutanoate hydroxymethyltransferase (267 aa).

Mg(2+)-binding residues include Asp45 and Asp84. Residues 45-46 (DS), Asp84, and Lys113 contribute to the 3-methyl-2-oxobutanoate site. A Mg(2+)-binding site is contributed by Glu115. Residue Glu182 is the Proton acceptor of the active site.

Belongs to the PanB family. Homodecamer; pentamer of dimers. It depends on Mg(2+) as a cofactor.

It is found in the cytoplasm. The enzyme catalyses 3-methyl-2-oxobutanoate + (6R)-5,10-methylene-5,6,7,8-tetrahydrofolate + H2O = 2-dehydropantoate + (6S)-5,6,7,8-tetrahydrofolate. Its pathway is cofactor biosynthesis; coenzyme A biosynthesis. Catalyzes the reversible reaction in which hydroxymethyl group from 5,10-methylenetetrahydrofolate is transferred onto alpha-ketoisovalerate to form ketopantoate. This Saccharolobus solfataricus (strain ATCC 35092 / DSM 1617 / JCM 11322 / P2) (Sulfolobus solfataricus) protein is 3-methyl-2-oxobutanoate hydroxymethyltransferase.